Reading from the N-terminus, the 88-residue chain is Toxin RelE3 (88 aa).

Belongs to the RelE toxin family. In terms of assembly, forms heterodimers with RelB3 and possibly a heterotetramer RelE3-RelB3(2)-RelE3 from 2 heterodimers. The heterotetramer is probably not very stable in solution.

Toxic component of a type II toxin-antitoxin (TA) system. Has RNase activity. Is very toxic upon expression in E.coli. Its toxic activity is probably neutralized by the cognate antitoxin RelB3. The polypeptide is Toxin RelE3 (relE3) (Methanocaldococcus jannaschii (strain ATCC 43067 / DSM 2661 / JAL-1 / JCM 10045 / NBRC 100440) (Methanococcus jannaschii)).